Here is a 292-residue protein sequence, read N- to C-terminus: MNHQSEKINHILEALPYLINYSGKTIVIKYGGAAMVEEELKASFAEDIVLLKYLGINPVVVHGGGPEINSLIKSLNLNTQFIRGHRVTDEATMEVVEMVLTGKVNKQIVSLIQEKGGKPVGLSGKDGGLAIAEKYLMEVEAEDGKSQKIDLGLVGEITSVDPNIILTLQREGFIPIISPVAMSKEGQTLNINADTMAGAIAQALHADKLILLTDTPGILIDGQLVTGLKKVDIHGYIKTGQISGGMIPKVECCLGAIDSGVKRAHIIDGRVPHSVLIEILTNQGIGSLIEQG.

Substrate-binding positions include 64–65, Arg-86, and Asn-190; that span reads GG.

Belongs to the acetylglutamate kinase family. ArgB subfamily.

It localises to the cytoplasm. The catalysed reaction is N-acetyl-L-glutamate + ATP = N-acetyl-L-glutamyl 5-phosphate + ADP. The protein operates within amino-acid biosynthesis; L-arginine biosynthesis; N(2)-acetyl-L-ornithine from L-glutamate: step 2/4. Catalyzes the ATP-dependent phosphorylation of N-acetyl-L-glutamate. The sequence is that of Acetylglutamate kinase from Leptospira biflexa serovar Patoc (strain Patoc 1 / Ames).